A 342-amino-acid chain; its full sequence is Cystein proteinase inhibitor protein salarin (342 aa).

Residues 1–19 (MKSLVLLLLVAVTVSSVVS) form the signal peptide. N153 carries an N-linked (GlcNAc) asparagine glycan. T184 is a glycosylation site (O-linked (GlcNAc) threonine).

In terms of processing, N-glycosylated, with sialylated biantennary complex-type glycans. O-glycosylated, with sialylated oligosaccharides. In terms of tissue distribution, expressed in the skin, liver. intestine, spleen, pancreas and kidney.

The protein localises to the cytoplasm. It is found in the vacuole. Inhibits papain and ficin (cysteine proteinases) but not trypsin (a serine proteinase). The chain is Cystein proteinase inhibitor protein salarin (salarin) from Salmo salar (Atlantic salmon).